The primary structure comprises 393 residues: Bifunctional chrysanthemol synthase, chloroplastic (393 aa).

Positions 1–18 are enriched in low complexity; it reads MACSSSLSSKWASWGASS. The tract at residues 1-22 is disordered; sequence MACSSSLSSKWASWGASSRPHP. Residues 1 to 53 constitute a chloroplast transit peptide; sequence MACSSSLSSKWASWGASSRPHPSVQPFVTRKNVVRYHKPTSELSYSPLTTTLS. Residues Lys99, Arg102, and Gln137 each contribute to the dimethylallyl diphosphate site. Mg(2+) is bound by residues Asp144 and Asp148. 7 residues coordinate dimethylallyl diphosphate: Arg153, Arg154, Lys241, Gln280, Asp287, Lys297, and Lys306.

The protein belongs to the FPP/GGPP synthase family. Requires Mg(2+) as cofactor. In terms of tissue distribution, restricted to glandular trichomes during achene maturation. Expressed in flowers and in both ray and disk florets.

It localises to the plastid. It is found in the chloroplast. It catalyses the reaction 2 dimethylallyl diphosphate = (R,R)-chrysanthemyl diphosphate + diphosphate. The enzyme catalyses (R,R)-chrysanthemyl diphosphate + H2O = (R,R)-chrysanthemol + diphosphate. It carries out the reaction (R)-lavandulyl diphosphate + H2O = (R)-lavandulol + diphosphate. It participates in isoprenoid biosynthesis. In terms of biological role, component of the monoterpenoid pyrethrins biosynthesis; pyrethrins are widely used plant-derived pesticide. Catalyzes the condensation of two molecules of dimethylallyl diphosphate to produce chrysanthemyl diphosphate (CPP), a monoterpene with a non-head-to-tail or irregular c1'-2-3 linkage between isoprenoid units. In a second step, hydrolyzes the diphosphate moiety of CPP to form chrysanthemol. With a lower efficiency, can also converts dimethylallyl diphosphate into lavandulyl diphosphate (LPP), and subsequently LPP into lavandulol. The protein is Bifunctional chrysanthemol synthase, chloroplastic of Tanacetum cinerariifolium (Dalmatian daisy).